A 162-amino-acid polypeptide reads, in one-letter code: Deoxyuridine 5'-triphosphate nucleotidohydrolase (162 aa).

Ser-11 carries the phosphoserine modification. DUTP is bound by residues 83–85, 97–103, Gly-108, Arg-151, and 156–157; these read RSG, GVIDEDY, and FG.

Belongs to the dUTPase family. As to quaternary structure, homotrimer. Mg(2+) is required as a cofactor. Post-translationally, phosphorylated in vivo on Ser-11, a reaction that can be catalyzed in vitro by CDC2.

Its subcellular location is the nucleus. The catalysed reaction is dUTP + H2O = dUMP + diphosphate + H(+). Its pathway is pyrimidine metabolism; dUMP biosynthesis; dUMP from dCTP (dUTP route): step 2/2. Its function is as follows. Catalyzes the cleavage of 2'-deoxyuridine 5'-triphosphate (dUTP) into 2'-deoxyuridine 5'-monophosphate (dUMP) and inorganic pyrophosphate and through its action efficiently prevents uracil misincorporation into DNA and at the same time provides dUMP, the substrate for de novo thymidylate biosynthesis. Inhibits peroxisome proliferator-activated receptor (PPAR) activity by binding of its N-terminal to PPAR, preventing the latter's dimerization with retinoid X receptor. Essential for embryonic development. The chain is Deoxyuridine 5'-triphosphate nucleotidohydrolase (Dut) from Mus musculus (Mouse).